Consider the following 394-residue polypeptide: MAETFLFTSESVNEGHPDKLCDQISDAVLDACLEQDPDSKVACETCTKTNMVMVFGEITTKANVDYEKIVRDTCRTIGFISDDVGLDADKCKVLVNIEQQSPDIAQGVHGHFTKRPEEVGAGDQGHMFGYATDETPELMPLTHVLATKLGSRLTEVRKNGTCAWLRPDGKTQVTIEYYNENGAMVPVRVHTVLISTQHDETVSNDQIAADLKEHVIKPVIPEKYLDEKTIFHLNPSGRFVIGGPHGDAGLTGRKIIIDTYGGWGAHGGGAFSGKDPTKVDRSGAYVVRQAAKSIVANGLARRCIVQVSYAIGVPEPLSVFVDSYGTGKIPDREILQIVKENFDFRPGMITINLDLKRGGNSRFLKTAAYGHFGRDDPDFTWEVVKPLKWEKPQA.

Glu-10 lines the Mg(2+) pocket. His-16 lines the ATP pocket. Glu-44 lines the K(+) pocket. The L-methionine site is built by Glu-57 and Gln-100. ATP contacts are provided by residues 168-170 (DGK), 236-239 (SGRF), Asp-247, 253-254 (RK), Ala-270, Lys-274, and Lys-278. Residue Asp-247 participates in L-methionine binding. Lys-278 provides a ligand contact to L-methionine.

Belongs to the AdoMet synthase family. As to quaternary structure, homotetramer. The cofactor is Mn(2+). Requires Mg(2+) as cofactor. Co(2+) is required as a cofactor. K(+) serves as cofactor.

The protein localises to the cytoplasm. The enzyme catalyses L-methionine + ATP + H2O = S-adenosyl-L-methionine + phosphate + diphosphate. It functions in the pathway amino-acid biosynthesis; S-adenosyl-L-methionine biosynthesis; S-adenosyl-L-methionine from L-methionine: step 1/1. In terms of biological role, catalyzes the formation of S-adenosylmethionine from methionine and ATP. The reaction comprises two steps that are both catalyzed by the same enzyme: formation of S-adenosylmethionine (AdoMet) and triphosphate, and subsequent hydrolysis of the triphosphate. The sequence is that of S-adenosylmethionine synthase (METK) from Medicago truncatula (Barrel medic).